The following is a 344-amino-acid chain: Meiotically up-regulated gene 10 protein (344 aa).

Residues 48–207 form the DH domain; that stretch reads EFNSILQEII…RELCSYIDQE (160 aa).

It localises to the cytoplasm. Its subcellular location is the nucleus. Has a role in meiosis. The protein is Meiotically up-regulated gene 10 protein (mug10) of Schizosaccharomyces pombe (strain 972 / ATCC 24843) (Fission yeast).